The sequence spans 336 residues: HTH-type transcriptional regulator RafR (336 aa).

Positions 2-55 (SLKAIATTLGISVTTVSRALGGFSDVAASTRERVEAEARRRGYRPNTQARRLKT) constitute an HTH lacI-type domain. A DNA-binding region (H-T-H motif) is located at residues 3 to 22 (LKAIATTLGISVTTVSRALG).

As to quaternary structure, homodimer.

Repressor that negatively controls the expression of the raffinose (raf) operon by binding to the raf operator (rafO) DNA. Acts by binding to two operator sites, O1 and 02, which flank the -35 raf promoter box. RafR bound to 02 alone results in 45 % repression of transcription, whereas RafR bound to O1 leads to only 6% repression. The sequence is that of HTH-type transcriptional regulator RafR from Escherichia coli.